A 223-amino-acid polypeptide reads, in one-letter code: Neurotrophic factor BDNF precursor form (223 aa).

A signal peptide spans 1–5 (SCMKA). Residues 6 to 114 (APMKEISIRG…AANMSMRVRR (109 aa)) constitute a propeptide that is removed on maturation. Asn-107 carries N-linked (GlcNAc...) asparagine glycosylation. 2 disulfide bridges follow: Cys-127/Cys-194 and Cys-172/Cys-223.

Belongs to the NGF-beta family.

It localises to the secreted. In terms of biological role, promotes the survival of neuronal populations that are all located either in the central nervous system or directly connected to it. The sequence is that of Neurotrophic factor BDNF precursor form (BDNF) from Acrochordus javanicus (Javan wart snake).